The following is a 111-amino-acid chain: Probable 4-amino-4-deoxy-L-arabinose-phosphoundecaprenol flippase subunit ArnE (111 aa).

Residues 1–37 are Cytoplasmic-facing; that stretch reads MIWLTLVFASLLSVAGQLCQKQATCFVAINKRRKHIA. The chain crosses the membrane as a helical span at residues 38-58; it reads LWLGLALACLGLAMVLWLLVL. In terms of domain architecture, EamA spans 40 to 109; the sequence is LGLALACLGL…IIGGIVILGS (70 aa). The Periplasmic portion of the chain corresponds to 59-60; it reads QN. The chain crosses the membrane as a helical span at residues 61-81; sequence VPVGIAYPMLSLNFVWVTLAA. Topologically, residues 82 to 87 are cytoplasmic; sequence VKLWHE. A helical transmembrane segment spans residues 88 to 108; it reads PVSPRHWCGVAFIIGGIVILG. Topologically, residues 109–111 are periplasmic; that stretch reads STV.

It belongs to the ArnE family. Heterodimer of ArnE and ArnF.

It localises to the cell inner membrane. It functions in the pathway bacterial outer membrane biogenesis; lipopolysaccharide biosynthesis. Its function is as follows. Translocates 4-amino-4-deoxy-L-arabinose-phosphoundecaprenol (alpha-L-Ara4N-phosphoundecaprenol) from the cytoplasmic to the periplasmic side of the inner membrane. This Escherichia coli (strain 55989 / EAEC) protein is Probable 4-amino-4-deoxy-L-arabinose-phosphoundecaprenol flippase subunit ArnE.